The primary structure comprises 216 residues: Imidazole glycerol phosphate synthase subunit HisH (216 aa).

A Glutamine amidotransferase type-1 domain is found at Arg-2–Pro-216. The active-site Nucleophile is Cys-88. Residues His-196 and Glu-198 contribute to the active site.

As to quaternary structure, heterodimer of HisH and HisF.

It localises to the cytoplasm. The enzyme catalyses 5-[(5-phospho-1-deoxy-D-ribulos-1-ylimino)methylamino]-1-(5-phospho-beta-D-ribosyl)imidazole-4-carboxamide + L-glutamine = D-erythro-1-(imidazol-4-yl)glycerol 3-phosphate + 5-amino-1-(5-phospho-beta-D-ribosyl)imidazole-4-carboxamide + L-glutamate + H(+). The catalysed reaction is L-glutamine + H2O = L-glutamate + NH4(+). It functions in the pathway amino-acid biosynthesis; L-histidine biosynthesis; L-histidine from 5-phospho-alpha-D-ribose 1-diphosphate: step 5/9. In terms of biological role, IGPS catalyzes the conversion of PRFAR and glutamine to IGP, AICAR and glutamate. The HisH subunit catalyzes the hydrolysis of glutamine to glutamate and ammonia as part of the synthesis of IGP and AICAR. The resulting ammonia molecule is channeled to the active site of HisF. The protein is Imidazole glycerol phosphate synthase subunit HisH of Brucella melitensis biotype 1 (strain ATCC 23456 / CCUG 17765 / NCTC 10094 / 16M).